A 299-amino-acid polypeptide reads, in one-letter code: ATP phosphoribosyltransferase (299 aa).

The protein belongs to the ATP phosphoribosyltransferase family. Long subfamily. As to quaternary structure, equilibrium between an active dimeric form, an inactive hexameric form and higher aggregates. Interconversion between the various forms is largely reversible and is influenced by the natural substrates and inhibitors of the enzyme. It depends on Mg(2+) as a cofactor.

The protein resides in the cytoplasm. The catalysed reaction is 1-(5-phospho-beta-D-ribosyl)-ATP + diphosphate = 5-phospho-alpha-D-ribose 1-diphosphate + ATP. It functions in the pathway amino-acid biosynthesis; L-histidine biosynthesis; L-histidine from 5-phospho-alpha-D-ribose 1-diphosphate: step 1/9. Its activity is regulated as follows. Feedback inhibited by histidine. Its function is as follows. Catalyzes the condensation of ATP and 5-phosphoribose 1-diphosphate to form N'-(5'-phosphoribosyl)-ATP (PR-ATP). Has a crucial role in the pathway because the rate of histidine biosynthesis seems to be controlled primarily by regulation of HisG enzymatic activity. The chain is ATP phosphoribosyltransferase from Buchnera aphidicola subsp. Baizongia pistaciae (strain Bp).